The chain runs to 215 residues: Urease accessory protein UreG (215 aa).

Residue 24–31 (GPVGSGKT) participates in GTP binding.

Belongs to the SIMIBI class G3E GTPase family. UreG subfamily. In terms of assembly, homodimer. UreD, UreF and UreG form a complex that acts as a GTP-hydrolysis-dependent molecular chaperone, activating the urease apoprotein by helping to assemble the nickel containing metallocenter of UreC. The UreE protein probably delivers the nickel.

It localises to the cytoplasm. Its function is as follows. Facilitates the functional incorporation of the urease nickel metallocenter. This process requires GTP hydrolysis, probably effectuated by UreG. The chain is Urease accessory protein UreG from Burkholderia ambifaria (strain MC40-6).